Reading from the N-terminus, the 538-residue chain is 2-isopropylmalate synthase (538 aa).

Residues 6–277 (LIIFDTTLRD…DSTVPLSTID (272 aa)) enclose the Pyruvate carboxyltransferase domain. 4 residues coordinate Mn(2+): D15, H206, H208, and N242. Residues 406–538 (RLEQVQVSCG…AHPDAAAQKL (133 aa)) are regulatory domain.

It belongs to the alpha-IPM synthase/homocitrate synthase family. LeuA type 1 subfamily. As to quaternary structure, homodimer. The cofactor is Mn(2+).

It is found in the cytoplasm. It catalyses the reaction 3-methyl-2-oxobutanoate + acetyl-CoA + H2O = (2S)-2-isopropylmalate + CoA + H(+). It functions in the pathway amino-acid biosynthesis; L-leucine biosynthesis; L-leucine from 3-methyl-2-oxobutanoate: step 1/4. Its function is as follows. Catalyzes the condensation of the acetyl group of acetyl-CoA with 3-methyl-2-oxobutanoate (2-ketoisovalerate) to form 3-carboxy-3-hydroxy-4-methylpentanoate (2-isopropylmalate). This Gloeobacter violaceus (strain ATCC 29082 / PCC 7421) protein is 2-isopropylmalate synthase.